The sequence spans 460 residues: MIEKCIGAHRFRRLQRFMRQGKVTILCLVLTVIVLRGTIGAGKFGTPEKDIEEIREHFFYTRKRGEPHRVLVEVSSKTTSSEDGGNGGNSYETFDINKLFVDEGDEEKSRDRTNKPYSLGPKISDWDEQRRDWLKQNPSFPNFVAPNKPRVLLVTGSAPKPCENPVGDHYLLKSIKNKIDYCRIHGIEIFYNMALLDAEMAGFWAKLPLIRKLLLSHPEIEFLWWMDSDAMFTDMVFELPWERYKDYNLVMHGWNEMVYDQKNWIGLNTGSFLLRNSQWSLDLLDAWAPMGPKGKIREEAGKVLTRELKDRPAFEADDQSAMVYLLATEREKWGGKVYLESGYYLHGYWGILVDRYEEMIENHKPGFGDHRWPLVTHFVGCKPCGKFGDYPVERCLRQMDRAFNFGDNQILQMYGFTHKSLGSRRVKPTRNQTDRPLDAKDEFGLLHPPFKAAKLSTTTT.

Residues 1-20 (MIEKCIGAHRFRRLQRFMRQ) lie on the Cytoplasmic side of the membrane. A helical; Signal-anchor for type II membrane protein transmembrane segment spans residues 21 to 40 (GKVTILCLVLTVIVLRGTIG). Residues 41-460 (AGKFGTPEKD…KAAKLSTTTT (420 aa)) lie on the Lumenal side of the membrane. Residues glycine 156 and 227 to 229 (DSD) each bind UDP-alpha-D-xylose. Mn(2+) contacts are provided by aspartate 227 and aspartate 229. A substrate-binding site is contributed by histidine 346. Residues histidine 377, glycine 380, and lysine 382 each coordinate UDP-alpha-D-xylose. Residue histidine 377 participates in Mn(2+) binding. Substrate contacts are provided by residues lysine 382 and 389-390 (DY). N-linked (GlcNAc...) asparagine glycosylation is present at asparagine 431.

This sequence belongs to the glycosyltransferase 34 family. As to quaternary structure, forms homodimer. Interacts with XXT2. Requires Mn(2+) as cofactor.

Its subcellular location is the golgi apparatus membrane. The catalysed reaction is Transfers an alpha-D-xylosyl residue from UDP-D-xylose to a glucose residue in xyloglucan, forming an alpha-(1-&gt;6)-D-xylosyl-D-glucose linkage.. Its pathway is protein modification; protein glycosylation. Xylosyltransferase specific to UDP-D-xylose that accepts both cellopentaose and cellohexaose as substrates, with a better use of cellohexaose, to produce xyloglucan. Adds preferentially the first xylosyl residue to the fourth glucosyl residue from the reducing end of both acceptors. Transfer one xylose mainly to the second glucose residue from the non-reducing end. The acceptor should have a minimum of four glucose residues. The polypeptide is Xyloglucan 6-xylosyltransferase 1 (Arabidopsis thaliana (Mouse-ear cress)).